Consider the following 143-residue polypeptide: Flagellar assembly factor FliW (143 aa).

This sequence belongs to the FliW family. As to quaternary structure, interacts with translational regulator CsrA and flagellin(s).

It localises to the cytoplasm. Functionally, acts as an anti-CsrA protein, binds CsrA and prevents it from repressing translation of its target genes, one of which is flagellin. Binds to flagellin and participates in the assembly of the flagellum. This is Flagellar assembly factor FliW from Bacillus licheniformis (strain ATCC 14580 / DSM 13 / JCM 2505 / CCUG 7422 / NBRC 12200 / NCIMB 9375 / NCTC 10341 / NRRL NRS-1264 / Gibson 46).